The sequence spans 568 residues: Proline--tRNA ligase (568 aa).

This sequence belongs to the class-II aminoacyl-tRNA synthetase family. ProS type 1 subfamily. Homodimer.

The protein localises to the cytoplasm. The catalysed reaction is tRNA(Pro) + L-proline + ATP = L-prolyl-tRNA(Pro) + AMP + diphosphate. In terms of biological role, catalyzes the attachment of proline to tRNA(Pro) in a two-step reaction: proline is first activated by ATP to form Pro-AMP and then transferred to the acceptor end of tRNA(Pro). As ProRS can inadvertently accommodate and process non-cognate amino acids such as alanine and cysteine, to avoid such errors it has two additional distinct editing activities against alanine. One activity is designated as 'pretransfer' editing and involves the tRNA(Pro)-independent hydrolysis of activated Ala-AMP. The other activity is designated 'posttransfer' editing and involves deacylation of mischarged Ala-tRNA(Pro). The misacylated Cys-tRNA(Pro) is not edited by ProRS. The sequence is that of Proline--tRNA ligase from Chlamydia pneumoniae (Chlamydophila pneumoniae).